Reading from the N-terminus, the 680-residue chain is MEEGGGSGVGGMQGAASNLLDAGAQAFYPAVGAPFPFQQLPHQLYCPQPPPPPYQVMPVSPPPPPVGLPVPPLPATMAPQPGYCVPAAATVVDGPASRAVVLSLVPPHAPEDEIARAMAPFGAVRAVDASAVASEGVATVYFFDLRSAEHAVTGVREQHIRQQCRLGQLYAAAAAAAASSPTWPPPAWDWPHDDNRGLVLGQAVWAHFAAASTVPDDGASRGSLVVLNSLPAMSVFELREIFQAYGDVKDVRESALRPSNKFVEFFDTRDADRALHELNGKELFGRRLVVEYTRPSLPGPRRRGHVSHQPLAPTPPRLQAAWRPAPAPSQSAQPSSSGSGKAREGVVLLRRSSGKGSSGSQSKGGGNAGHERKSKGGKSAAAACSTAASASSSTATAPSKQSQKGGGGRGGSWRGQKSGWEARFLFKEPEAAAAAAGDAAASETHEPASCKDTRTTVMIRNIPNKYSQKLLLNMLDNHCILSNQQIEASCEDEAQPFSSYDFLYLPIDFNNKCNVGYGFVNLTSPEAAVRLYKAFHKQPWEVFNSRKICQVTYARVQGLDALKEHFKNSKFPCDSDEYLPVVFSPPRDGKLLTEPVPLVGRSPAPSSASGASSPPKSCAASVDPLAQQLMTAPSSSGDGASSASSSNAHADEDDVHGETGGDRGDDAGLDLELQRLGYTD.

An RRM domain is found at 223–295 (SLVVLNSLPA…RRLVVEYTRP (73 aa)). Disordered stretches follow at residues 294-415 (RPSL…SWRG) and 593-680 (TEPV…GYTD). 2 stretches are compositionally biased toward low complexity: residues 328–340 (PSQS…SGSG) and 379–403 (SAAA…KQSQ). Residues 404-413 (KGGGGRGGSW) are compositionally biased toward gly residues. 2 stretches are compositionally biased toward low complexity: residues 602 to 621 (SPAP…CAAS) and 634 to 648 (SSSG…SSNA). Residues 656 to 666 (HGETGGDRGDD) show a composition bias toward basic and acidic residues.

Highly expressed in shoot apex and inflorescence apex, at intermediate levels in roots and at low levels in leaf blade and leaf sheath.

In terms of biological role, probable RNA-binding protein. Involved in the regular timing (plastochron) of lateral organs formation. May regulate the rate of leaf initiation and the duration of vegetative phase. Seems to be redundant to the function of PLASTOCHRON1, but to act in an independent pathway. This Oryza sativa subsp. indica (Rice) protein is Protein terminal ear1 homolog (PLA2).